A 488-amino-acid polypeptide reads, in one-letter code: Auxin transporter-like protein 1 (488 aa).

Positions 1–36 (MSGEKQAEESIVVSGEDEVAGRKVEDSAAEEDIDGN) are disordered. Topologically, residues 1–64 (MSGEKQAEES…DAWFSCASNQ (64 aa)) are cytoplasmic. A helical transmembrane segment spans residues 65 to 82 (VAQVLLTLPYSFSQLGML). At 83 to 84 (SG) the chain is on the extracellular side. The helical transmembrane segment at 85–105 (ILLQIFYGLMGSWTAYLISVL) threads the bilayer. Topologically, residues 106–141 (YVEYRARMEKQEAKSFKNHVIQWFEVLDGLLGPYWK) are cytoplasmic. The chain crosses the membrane as a helical span at residues 142-162 (AAGLAFNCTFLLFGSVIQLIA). Residues 163-178 (CASNIYYINDRLDKRT) are Extracellular-facing. A helical transmembrane segment spans residues 179-199 (WTYIFGACCATTVFIPSFHNY). At 200–202 (RIW) the chain is on the cytoplasmic side. The helical transmembrane segment at 203-223 (SFLGLGMTTYTAWYLTIASFL) threads the bilayer. Topologically, residues 224-238 (HGQAEGVTHSGPTKL) are extracellular. A helical transmembrane segment spans residues 239–259 (VLYFTGATNILYTFGGHAVTV). Residues 260–273 (EIMHAMWKPRKFKS) are Cytoplasmic-facing. A helical membrane pass occupies residues 274 to 294 (IYLMATLYVFTLTLPSASAVY). At 295–320 (WAFGDQLLNHSNAFSLLPKTRFRDTA) the chain is on the extracellular side. An N-linked (GlcNAc...) asparagine glycan is attached at Asn-303. A helical membrane pass occupies residues 321–341 (VILMLIHQFITFGFACTPLYF). The Cytoplasmic portion of the chain corresponds to 342-362 (VWEKAIGMHHTKSLCLRALVR). Residues 363-383 (LPVVVPIWFLAIIFPFFGPIN) traverse the membrane as a helical segment. A topological domain (extracellular) is located at residue Ser-384. A helical transmembrane segment spans residues 385–405 (AVGALLVTFTVYIIPALAHML). Residues 406-427 (TYRTASARRNAAEKPPFFIPSW) are Cytoplasmic-facing. Residues 428–448 (AGVYVINAFIVVWVLVLGFGF) traverse the membrane as a helical segment. Topologically, residues 449–488 (GGWASMTNFIRQIDTFGLFAKCYQCKPPPAPIAAGAHHRR) are extracellular.

The protein belongs to the amino acid/polyamine transporter 2 family. Amino acid/auxin permease (AAAP) (TC 2.A.18.1) subfamily.

It localises to the cell membrane. Its function is as follows. Carrier protein involved in proton-driven auxin influx. Mediates the formation of auxin gradient from developing leaves (site of auxin biosynthesis) to tips by contributing to the loading of auxin in vascular tissues and facilitating acropetal (base to tip) auxin transport within inner tissues of the root apex, and basipetal (tip to base) auxin transport within outer tissues of the root apex. The protein is Auxin transporter-like protein 1 (LAX1) of Arabidopsis thaliana (Mouse-ear cress).